A 488-amino-acid chain; its full sequence is ATP synthase subunit beta (488 aa).

Residue 164–171 participates in ATP binding; sequence GGAGVGKT.

The protein belongs to the ATPase alpha/beta chains family. As to quaternary structure, F-type ATPases have 2 components, CF(1) - the catalytic core - and CF(0) - the membrane proton channel. CF(1) has five subunits: alpha(3), beta(3), gamma(1), delta(1), epsilon(1). CF(0) has four main subunits: a(1), b(1), b'(1) and c(9-12).

It is found in the cellular thylakoid membrane. The catalysed reaction is ATP + H2O + 4 H(+)(in) = ADP + phosphate + 5 H(+)(out). In terms of biological role, produces ATP from ADP in the presence of a proton gradient across the membrane. The catalytic sites are hosted primarily by the beta subunits. The polypeptide is ATP synthase subunit beta (Prochlorococcus marinus (strain MIT 9313)).